A 315-amino-acid polypeptide reads, in one-letter code: HTH-type transcriptional regulator TreR (315 aa).

The region spanning 5 to 59 (LTIKDIARLSGVGKSTVSRVLNNESGVSQLTRERVEAVMNQHGFSPSRSARAMRG) is the HTH lacI-type domain. Residues 7 to 26 (IKDIARLSGVGKSTVSRVLN) constitute a DNA-binding region (H-T-H motif). Residues 71 to 77 (RLDSLSE), glycine 126, arginine 147, 187 to 190 (DVTT), arginine 194, threonine 242, and tyrosine 284 each bind alpha,alpha-trehalose 6-phosphate.

In terms of assembly, homodimer.

Repressor of the treBC operon. It is able to bind trehalose-6-phosphate and trehalose. The protein is HTH-type transcriptional regulator TreR (treR) of Escherichia coli (strain K12).